A 437-amino-acid polypeptide reads, in one-letter code: Phosphomethylpyrimidine synthase (437 aa).

Substrate is bound by residues Asn-69, Met-98, Tyr-127, His-163, 185 to 187, 226 to 229, and Glu-265; these read SRG and DACR. His-269 is a binding site for Zn(2+). Residue Tyr-292 coordinates substrate. His-333 lines the Zn(2+) pocket. 3 residues coordinate [4Fe-4S] cluster: Cys-409, Cys-412, and Cys-416.

This sequence belongs to the ThiC family. The cofactor is [4Fe-4S] cluster.

It carries out the reaction 5-amino-1-(5-phospho-beta-D-ribosyl)imidazole + S-adenosyl-L-methionine = 4-amino-2-methyl-5-(phosphooxymethyl)pyrimidine + CO + 5'-deoxyadenosine + formate + L-methionine + 3 H(+). Its pathway is cofactor biosynthesis; thiamine diphosphate biosynthesis. Its function is as follows. Catalyzes the synthesis of the hydroxymethylpyrimidine phosphate (HMP-P) moiety of thiamine from aminoimidazole ribotide (AIR) in a radical S-adenosyl-L-methionine (SAM)-dependent reaction. In Alkaliphilus metalliredigens (strain QYMF), this protein is Phosphomethylpyrimidine synthase.